A 267-amino-acid chain; its full sequence is 5'-nucleotidase SurE (267 aa).

Residues D9, D10, S40, and N97 each contribute to the a divalent metal cation site.

It belongs to the SurE nucleotidase family. The cofactor is a divalent metal cation.

Its subcellular location is the cytoplasm. It carries out the reaction a ribonucleoside 5'-phosphate + H2O = a ribonucleoside + phosphate. Functionally, nucleotidase that shows phosphatase activity on nucleoside 5'-monophosphates. The chain is 5'-nucleotidase SurE from Helicobacter pylori (strain J99 / ATCC 700824) (Campylobacter pylori J99).